Here is a 432-residue protein sequence, read N- to C-terminus: Pachytene checkpoint protein 2 homolog (432 aa).

179-186 provides a ligand contact to ATP; that stretch reads GPPGTGKT.

Belongs to the AAA ATPase family. PCH2 subfamily.

Its function is as follows. Plays a key role in chromosome recombination and chromosome structure development during meiosis. Required at early steps in meiotic recombination that leads to non-crossovers pathways. Also needed for efficient completion of homologous synapsis by influencing crossover distribution along the chromosomes affecting both crossovers and non-crossovers pathways. The polypeptide is Pachytene checkpoint protein 2 homolog (trip13) (Xenopus tropicalis (Western clawed frog)).